A 127-amino-acid polypeptide reads, in one-letter code: Small ribosomal subunit protein uS12 (127 aa).

The disordered stretch occupies residues 1–28 (MPTIQQLIRDERSKAKRKTKSPALKQCP). Position 89 is a 3-methylthioaspartic acid (Asp89). A disordered region spans residues 104–127 (ATGVKNRQKARSKYGTKRPKPAAK). The segment covering 109-127 (NRQKARSKYGTKRPKPAAK) has biased composition (basic residues).

The protein belongs to the universal ribosomal protein uS12 family. As to quaternary structure, part of the 30S ribosomal subunit. Contacts proteins S8 and S17. May interact with IF1 in the 30S initiation complex.

Functionally, with S4 and S5 plays an important role in translational accuracy. In terms of biological role, interacts with and stabilizes bases of the 16S rRNA that are involved in tRNA selection in the A site and with the mRNA backbone. Located at the interface of the 30S and 50S subunits, it traverses the body of the 30S subunit contacting proteins on the other side and probably holding the rRNA structure together. The combined cluster of proteins S8, S12 and S17 appears to hold together the shoulder and platform of the 30S subunit. The protein is Small ribosomal subunit protein uS12 of Microcystis aeruginosa (strain NIES-843 / IAM M-2473).